The sequence spans 418 residues: Diacylglycerol O-acyltransferase 1 (418 aa).

Residues 1–30 (MSGTFNDIRRRKKEEGSPTAGITERHENKS) form a disordered region. Residues 1–71 (MSGTFNDIRR…LAVAWHTSSF (71 aa)) are Cytoplasmic-facing. S17 carries the phosphoserine modification. A helical membrane pass occupies residues 72-92 (VLFSIFTLFAISTPALWVLAI). Topologically, residues 93–186 (PYMIYFFFDR…DYRNQECTGP (94 aa)) are lumenal. An N-linked (GlcNAc...) asparagine glycan is attached at N173. A helical membrane pass occupies residues 187–207 (TYLFGYHPHGIGALGAFGAFA). At 208-215 (TEGCNYSK) the chain is on the cytoplasmic side. The helical transmembrane segment at 216–236 (IFPGIPISLMTLVTQFHIPLY) threads the bilayer. Residues 237 to 289 (RDYLLALGISSVSRKNALRTLSKNQSICIVVGGARESLLSSTNGTQLILNKRK) are Lumenal-facing. N260 and N279 each carry an N-linked (GlcNAc...) asparagine glycan. A helical membrane pass occupies residues 290–310 (GFIKLAIQTGNINLVPVFAFG). The Cytoplasmic segment spans residues 311–418 (EVDCYNVLST…VPDAELKIVG (108 aa)).

The protein belongs to the diacylglycerol acyltransferase family.

The protein resides in the lipid droplet. The protein localises to the endoplasmic reticulum membrane. It catalyses the reaction an acyl-CoA + a 1,2-diacyl-sn-glycerol = a triacyl-sn-glycerol + CoA. The enzyme catalyses a 2-acylglycerol + an acyl-CoA = a 1,2-diacylglycerol + CoA. The catalysed reaction is 2-(9Z-octadecenoyl)-glycerol + (9Z)-octadecenoyl-CoA = 1,2-di-(9Z-octadecenoyl)-glycerol + CoA. Its pathway is glycerolipid metabolism; triacylglycerol biosynthesis. Catalyzes the terminal and only committed step in triacylglycerol (TAG) synthesis by using diacylglycerol (DAG) and fatty acyl-CoA as substrates. Required for storage lipid synthesis. Major DAG esterifying enzyme in stationary phase when TAG production is particularly active. Involved in lipid particle synthesis from the endoplasmic reticulum, promoting localized TAG production at discrete ER subdomains, and in ergosterol biosynthesis. Also has monoacylglycerol acyltransferase (MGAT) activity, catalyzing the acyl-CoA-dependent esterification of monoacylglycerol to diacylglycerol. Can also utilize ceramide instead of DAG, acylating the ceramides by attaching a fatty acid to the hydroxy group on the first carbon atom of the long-chain base to produce 1-O-acylceramides. The chain is Diacylglycerol O-acyltransferase 1 (DGA1) from Saccharomyces cerevisiae (strain ATCC 204508 / S288c) (Baker's yeast).